The following is a 440-amino-acid chain: tRNA(Ile)-lysidine synthase (440 aa).

Residue 25–30 participates in ATP binding; that stretch reads SGGVDS.

This sequence belongs to the tRNA(Ile)-lysidine synthase family.

The protein localises to the cytoplasm. It carries out the reaction cytidine(34) in tRNA(Ile2) + L-lysine + ATP = lysidine(34) in tRNA(Ile2) + AMP + diphosphate + H(+). Ligates lysine onto the cytidine present at position 34 of the AUA codon-specific tRNA(Ile) that contains the anticodon CAU, in an ATP-dependent manner. Cytidine is converted to lysidine, thus changing the amino acid specificity of the tRNA from methionine to isoleucine. This Vibrio cholerae serotype O1 (strain ATCC 39315 / El Tor Inaba N16961) protein is tRNA(Ile)-lysidine synthase.